Consider the following 351-residue polypeptide: Photosystem II D2 protein (351 aa).

The helical transmembrane segment at Thr-39–Thr-59 threads the bilayer. His-116 lines the chlorophyll a pocket. Residues Gly-123–Pro-139 traverse the membrane as a helical segment. Residues Gln-128 and Asn-141 each coordinate pheophytin a. A helical membrane pass occupies residues Val-151–Ser-164. Residue His-196 participates in chlorophyll a binding. A helical transmembrane segment spans residues Gly-206 to Glu-226. A plastoquinone-binding residues include His-213 and Phe-260. His-213 is a binding site for Fe cation. A Fe cation-binding site is contributed by His-267. The chain crosses the membrane as a helical span at residues Gly-277–Arg-293.

The protein belongs to the reaction center PufL/M/PsbA/D family. PSII is composed of 1 copy each of membrane proteins PsbA, PsbB, PsbC, PsbD, PsbE, PsbF, PsbH, PsbI, PsbJ, PsbK, PsbL, PsbM, PsbT, PsbX, PsbY, PsbZ, Psb30/Ycf12, peripheral proteins PsbO, CyanoQ (PsbQ), PsbU, PsbV and a large number of cofactors. It forms dimeric complexes. The cofactor is The D1/D2 heterodimer binds P680, chlorophylls that are the primary electron donor of PSII, and subsequent electron acceptors. It shares a non-heme iron and each subunit binds pheophytin, quinone, additional chlorophylls, carotenoids and lipids. There is also a Cl(-1) ion associated with D1 and D2, which is required for oxygen evolution. The PSII complex binds additional chlorophylls, carotenoids and specific lipids..

The protein resides in the cellular thylakoid membrane. The enzyme catalyses 2 a plastoquinone + 4 hnu + 2 H2O = 2 a plastoquinol + O2. Functionally, photosystem II (PSII) is a light-driven water:plastoquinone oxidoreductase that uses light energy to abstract electrons from H(2)O, generating O(2) and a proton gradient subsequently used for ATP formation. It consists of a core antenna complex that captures photons, and an electron transfer chain that converts photonic excitation into a charge separation. The D1/D2 (PsbA/PsbD) reaction center heterodimer binds P680, the primary electron donor of PSII as well as several subsequent electron acceptors. D2 is needed for assembly of a stable PSII complex. The chain is Photosystem II D2 protein from Synechococcus sp. (strain CC9311).